The chain runs to 678 residues: DNA ligase (678 aa).

NAD(+)-binding positions include 47–51 (DSDYD), 96–97 (SL), and glutamate 122. The active-site N6-AMP-lysine intermediate is lysine 124. Residues arginine 145, glutamate 182, lysine 300, and lysine 324 each contribute to the NAD(+) site. Residues cysteine 418, cysteine 421, cysteine 436, and cysteine 442 each coordinate Zn(2+). One can recognise a BRCT domain in the interval 602 to 678 (AHNESFTNKT…IFEEDLQNLL (77 aa)).

This sequence belongs to the NAD-dependent DNA ligase family. LigA subfamily. Mg(2+) is required as a cofactor. Requires Mn(2+) as cofactor.

It carries out the reaction NAD(+) + (deoxyribonucleotide)n-3'-hydroxyl + 5'-phospho-(deoxyribonucleotide)m = (deoxyribonucleotide)n+m + AMP + beta-nicotinamide D-nucleotide.. Its function is as follows. DNA ligase that catalyzes the formation of phosphodiester linkages between 5'-phosphoryl and 3'-hydroxyl groups in double-stranded DNA using NAD as a coenzyme and as the energy source for the reaction. It is essential for DNA replication and repair of damaged DNA. This chain is DNA ligase, found in Francisella philomiragia subsp. philomiragia (strain ATCC 25017 / CCUG 19701 / FSC 153 / O#319-036).